The sequence spans 788 residues: Ribosome biogenesis protein ERB1 (788 aa).

Positions 1–91 (MGDLKGSRKR…SKPIREKSKP (91 aa)) are disordered. Positions 38–50 (LSDKSHDTEHSSD) are enriched in basic and acidic residues. Acidic residues predominate over residues 51 to 78 (SEIELVDDLSSDDGEEYEDEFDSDEIPS). Residues 80-91 (IESKPIREKSKP) are compositionally biased toward basic and acidic residues. 6 WD repeats span residues 433–472 (GHSG…QIWS), 476–516 (SDEE…PEME), 613–651 (KGGG…LVKI), 654–699 (PGAR…RPYK), 703–742 (YHQK…DLLS), and 758–788 (TGEL…RLWT).

Belongs to the WD repeat BOP1/ERB1 family. As to quaternary structure, component of the NOP7 complex, composed of ERB1, NOP7 and YTM1. The complex is held together by ERB1, which interacts with NOP7 via its N-terminal domain and with YTM1 via a high-affinity interaction between the seven-bladed beta-propeller domains of the 2 proteins. The NOP7 complex associates with the 66S pre-ribosome.

It is found in the nucleus. The protein localises to the nucleolus. The protein resides in the nucleoplasm. In terms of biological role, component of the NOP7 complex, which is required for maturation of the 25S and 5.8S ribosomal RNAs and formation of the 60S ribosome. The protein is Ribosome biogenesis protein ERB1 of Ajellomyces capsulatus (strain NAm1 / WU24) (Darling's disease fungus).